A 383-amino-acid chain; its full sequence is BRISC and BRCA1-A complex member 2 (383 aa).

The residue at position 1 (methionine 1) is an N-acetylmethionine. Residue serine 2 is modified to Phosphoserine. 2 UEV-like regions span residues 30–147 and 275–364; these read DATN…TLLE and IAAF…RAKA.

It belongs to the BABAM2 family. In terms of assembly, component of the ARISC complex, at least composed of UIMC1/RAP80, ABRAXAS1, BRCC3/BRCC36, BABAM2 and BABAM1/NBA1. Component of the BRCA1-A complex, at least composed of BRCA1, BARD1, UIMC1/RAP80, ABRAXAS1, BRCC3/BRCC36, BABAM2 and BABAM1/NBA1. In the BRCA1-A complex, interacts directly with ABRAXAS1, BRCC3/BRCC36 and BABAM1/NBA1. Binds polyubiquitin. Component of the BRISC complex, at least composed of ABRAXAS2, BRCC3/BRCC36, BABAM2 and BABAM1/NBA1. Identified in a complex with SHMT2 and the other subunits of the BRISC complex. Component of the BRCA1/BRCA2 containing complex (BRCC), which also contains BRCA1, BRCA2, BARD1, BRCC3/BRCC36 and RAD51. BRCC is a ubiquitin E3 ligase complex that enhances cellular survival following DNA damage. May interact with FAS and TNFRSF1A.

Its subcellular location is the cytoplasm. The protein localises to the nucleus. In terms of biological role, component of the BRCA1-A complex, a complex that specifically recognizes 'Lys-63'-linked ubiquitinated histones H2A and H2AX at DNA lesions sites, leading to target the BRCA1-BARD1 heterodimer to sites of DNA damage at double-strand breaks (DSBs). The BRCA1-A complex also possesses deubiquitinase activity that specifically removes 'Lys-63'-linked ubiquitin on histones H2A and H2AX. In the BRCA1-A complex, it acts as an adapter that bridges the interaction between BABAM1/NBA1 and the rest of the complex, thereby being required for the complex integrity and modulating the E3 ubiquitin ligase activity of the BRCA1-BARD1 heterodimer. Component of the BRISC complex, a multiprotein complex that specifically cleaves 'Lys-63'-linked ubiquitin in various substrates. Within the BRISC complex, acts as an adapter that bridges the interaction between BABAM1/NBA1 and the rest of the complex, thereby being required for the complex integrity. The BRISC complex is required for normal mitotic spindle assembly and microtubule attachment to kinetochores via its role in deubiquitinating NUMA1. The BRISC complex plays a role in interferon signaling via its role in the deubiquitination of the interferon receptor IFNAR1; deubiquitination increases IFNAR1 activity by enhancing its stability and cell surface expression. Down-regulates the response to bacterial lipopolysaccharide (LPS) via its role in IFNAR1 deubiquitination. May play a role in homeostasis or cellular differentiation in cells of neural, epithelial and germline origins. May also act as a death receptor-associated anti-apoptotic protein, which inhibits the mitochondrial apoptotic pathway. May regulate TNF-alpha signaling through its interactions with TNFRSF1A; however these effects may be indirect. In Bos taurus (Bovine), this protein is BRISC and BRCA1-A complex member 2 (BABAM2).